The sequence spans 479 residues: Aspartyl/glutamyl-tRNA(Asn/Gln) amidotransferase subunit B (479 aa).

It belongs to the GatB/GatE family. GatB subfamily. As to quaternary structure, heterotrimer of A, B and C subunits.

It catalyses the reaction L-glutamyl-tRNA(Gln) + L-glutamine + ATP + H2O = L-glutaminyl-tRNA(Gln) + L-glutamate + ADP + phosphate + H(+). The catalysed reaction is L-aspartyl-tRNA(Asn) + L-glutamine + ATP + H2O = L-asparaginyl-tRNA(Asn) + L-glutamate + ADP + phosphate + 2 H(+). Functionally, allows the formation of correctly charged Asn-tRNA(Asn) or Gln-tRNA(Gln) through the transamidation of misacylated Asp-tRNA(Asn) or Glu-tRNA(Gln) in organisms which lack either or both of asparaginyl-tRNA or glutaminyl-tRNA synthetases. The reaction takes place in the presence of glutamine and ATP through an activated phospho-Asp-tRNA(Asn) or phospho-Glu-tRNA(Gln). The polypeptide is Aspartyl/glutamyl-tRNA(Asn/Gln) amidotransferase subunit B (Streptococcus equi subsp. zooepidemicus (strain MGCS10565)).